We begin with the raw amino-acid sequence, 502 residues long: Cytochrome P450 71B16 (502 aa).

Residues 1 to 21 traverse the membrane as a helical segment; the sequence is MAISLLCLFLITLVSLIFVVK. Position 444 (cysteine 444) interacts with heme.

It belongs to the cytochrome P450 family. Heme serves as cofactor.

The protein localises to the membrane. The sequence is that of Cytochrome P450 71B16 (CYP71B16) from Arabidopsis thaliana (Mouse-ear cress).